The following is a 250-amino-acid chain: Aquaporin TIP2-1 (250 aa).

M1 carries the post-translational modification N-acetylmethionine. Residues 1–20 are Cytoplasmic-facing; sequence MAGVAFGSFDDSFSLASLRA. A2 carries the N-acetylalanine; in Aquaporin TIP2-1, N-terminally processed modification. A helical membrane pass occupies residues 21 to 41; that stretch reads YLAEFISTLLFVFAGVGSAIA. At 42–54 the chain is on the vacuolar side; that stretch reads YAKLTSDAALDTP. A helical transmembrane segment spans residues 55–75; the sequence is GLVAIAVCHGFALFVAVAIGA. Topologically, residues 76–98 are cytoplasmic; sequence NISGGHVNPAVTFGLAVGGQITV. The short motif at 83–85 is the NPA 1 element; that stretch reads NPA. A helical membrane pass occupies residues 99 to 119; that stretch reads ITGVFYWIAQLLGSTAACFLL. At 120-141 the chain is on the vacuolar side; the sequence is KYVTGGLAVPTHSVAAGLGSIE. A helical membrane pass occupies residues 142-162; it reads GVVMEIIITFALVYTVYATAA. Over 163 to 168 the chain is Cytoplasmic; that stretch reads DPKKGS. Residues 169–189 form a helical membrane-spanning segment; it reads LGTIAPLAIGLIVGANILAAG. At 190-215 the chain is on the vacuolar side; it reads PFSGGSMNPARSFGPAVAAGDFSGHW. The NPA 2 motif lies at 197 to 199; that stretch reads NPA. Residues 216 to 236 form a helical membrane-spanning segment; sequence VYWVGPLIGGGLAGLIYGNVF. Residues 237–250 are Cytoplasmic-facing; the sequence is MGSSEHVPLASADF.

It belongs to the MIP/aquaporin (TC 1.A.8) family. TIP (TC 1.A.8.10) subfamily. In terms of assembly, interacts with cucumber mosaic virus (CMV) Protein 1a. In terms of tissue distribution, strongly expressed in shoot, rosette, bolt and flowers. Also expressed in roots, flower buds and above ground.

It is found in the vacuole membrane. Aquaporin required to facilitate the transport of water from the vacuolar compartment to the cytoplasm. Does not promote glycerol permeability. Its function is impaired by Hg(2+). Transports urea in yeast cells and Xenopus laevis oocytes in a pH-independent manner. Transports methylammonium or ammonium in yeast cells and Xenopus laevis oocytes, preferentially at high medium pH. May participate in vacuolar compartmentation and detoxification of ammonium. The polypeptide is Aquaporin TIP2-1 (TIP2-1) (Arabidopsis thaliana (Mouse-ear cress)).